Here is an 835-residue protein sequence, read N- to C-terminus: Leucine--tRNA ligase (835 aa).

Positions 42–52 (PYPSGRIHMGH) match the 'HIGH' region motif. Residues 612–616 (KMSKS) carry the 'KMSKS' region motif. Lysine 615 serves as a coordination point for ATP.

This sequence belongs to the class-I aminoacyl-tRNA synthetase family.

It is found in the cytoplasm. It carries out the reaction tRNA(Leu) + L-leucine + ATP = L-leucyl-tRNA(Leu) + AMP + diphosphate. The sequence is that of Leucine--tRNA ligase from Rhizorhabdus wittichii (strain DSM 6014 / CCUG 31198 / JCM 15750 / NBRC 105917 / EY 4224 / RW1) (Sphingomonas wittichii).